Reading from the N-terminus, the 284-residue chain is 2-dehydro-3-deoxyphosphooctonate aldolase (284 aa).

Belongs to the KdsA family.

The protein resides in the cytoplasm. The enzyme catalyses D-arabinose 5-phosphate + phosphoenolpyruvate + H2O = 3-deoxy-alpha-D-manno-2-octulosonate-8-phosphate + phosphate. It functions in the pathway carbohydrate biosynthesis; 3-deoxy-D-manno-octulosonate biosynthesis; 3-deoxy-D-manno-octulosonate from D-ribulose 5-phosphate: step 2/3. The protein operates within bacterial outer membrane biogenesis; lipopolysaccharide biosynthesis. The sequence is that of 2-dehydro-3-deoxyphosphooctonate aldolase from Histophilus somni (strain 129Pt) (Haemophilus somnus).